We begin with the raw amino-acid sequence, 281 residues long: DegV domain-containing protein CA_C0948 (281 aa).

One can recognise a DegV domain in the interval 4 to 280 (IAIITDTTAD…PGLVGLVLLE (277 aa)). Hexadecanoate is bound by residues serine 60 and serine 93.

Its function is as follows. May bind long-chain fatty acids, such as palmitate, and may play a role in lipid transport or fatty acid metabolism. This chain is DegV domain-containing protein CA_C0948, found in Clostridium acetobutylicum (strain ATCC 824 / DSM 792 / JCM 1419 / IAM 19013 / LMG 5710 / NBRC 13948 / NRRL B-527 / VKM B-1787 / 2291 / W).